The primary structure comprises 64 residues: U-scoloptoxin(14)-Er1a (64 aa).

Residues 1–23 form the signal peptide; sequence MRPSFPLLLIMLLVCTAHHMVSG.

This sequence belongs to the scoloptoxin-14 family. In terms of processing, contains 4 disulfide bonds. As to expression, expressed by the venom gland.

Its subcellular location is the secreted. In Ethmostigmus rubripes (Giant centipede), this protein is U-scoloptoxin(14)-Er1a.